The chain runs to 209 residues: MTQKEQGQGFIEVICGPMFAGKTESLIQRRNKALKLKKKILSFKPRIDDRYSVKEEIVSHNRNNIPAILIDKSKDILTFITPEINVVIIDESQFLDNDIIAIVDYLANCNIEVIISGLELDFCGKPFGPMPYLLAIADTVTKLTSICAISGGKANRTQRLIEGKPAQSNEPVVLVGGKEYHEPRCRKHHCLADIDKTKVNWKNFANQSK.

ATP-binding positions include 16-23 (GPMFAGKT) and 90-93 (DESQ). The Proton acceptor role is filled by Glu-91.

The protein belongs to the thymidine kinase family. Homotetramer.

It is found in the cytoplasm. It carries out the reaction thymidine + ATP = dTMP + ADP + H(+). This chain is Thymidine kinase, found in Aster yellows witches'-broom phytoplasma (strain AYWB).